Here is a 230-residue protein sequence, read N- to C-terminus: uncharacterized protein (230 aa).

An ABC transporter domain is found at 2 to 230; sequence IQLSNVRKSY…ASSGQRSVGE (229 aa). 38–45 contacts ATP; sequence GPSGSGKS.

It belongs to the ABC transporter superfamily. As to quaternary structure, part of a complex composed of YknX, YknY and YknZ. The complex interacts with YknW.

Its subcellular location is the cell membrane. Part of an unusual four-component transporter, which is required for protection against the killing factor SdpC (sporulation-delaying protein). This is an uncharacterized protein from Bacillus subtilis (strain 168).